The chain runs to 528 residues: Na(+)/H(+) antiporter NhaB (528 aa).

11 consecutive transmembrane segments (helical) span residues 23–45, 66–86, 95–115, 139–159, 203–223, 241–261, 310–330, 349–369, 390–410, 448–468, and 476–496; these read FAIL…VAGW, PGGL…SQVL, VLLL…LLLF, AFLS…AVAV, LLMH…VGEP, LRMS…CFLV, LIIG…SVII, EEAL…GVII, LVIF…VFVG, ATPN…APLI, and VWMA…AIQF.

Belongs to the NhaB Na(+)/H(+) (TC 2.A.34) antiporter family.

The protein resides in the cell inner membrane. It catalyses the reaction 2 Na(+)(in) + 3 H(+)(out) = 2 Na(+)(out) + 3 H(+)(in). Its function is as follows. Na(+)/H(+) antiporter that extrudes sodium in exchange for external protons. The sequence is that of Na(+)/H(+) antiporter NhaB from Shewanella piezotolerans (strain WP3 / JCM 13877).